We begin with the raw amino-acid sequence, 141 residues long: ATP synthase F(0) complex subunit C2, mitochondrial (141 aa).

The transit peptide at 1–66 directs the protein to the mitochondrion; it reads MFSCFKFIST…RNFQTSAISR (66 aa). The chain crosses the membrane as a helical span at residues 82–102; the sequence is VGVAGSGAGIGTVFGSLIIGY. Lys-109 carries the post-translational modification N6,N6,N6-trimethyllysine. The helical transmembrane segment at 117-137 threads the bilayer; that stretch reads ILGFALSEAMGLFCLMVAFLI.

The protein belongs to the ATPase C chain family. In terms of assembly, F-type ATPases have 2 components, CF(1) - the catalytic core - and CF(0) - the membrane proton channel. CF(1) has five subunits: alpha(3), beta(3), gamma(1), delta(1), epsilon(1). CF(0) has three main subunits: a, b and c. Interacts with DNAJC30; interaction is direct. Trimethylated by ATPSCKMT at Lys-109. Methylation is required for proper incorporation of the C subunit into the ATP synthase complex and mitochondrial respiration.

Its subcellular location is the mitochondrion membrane. Its function is as follows. Mitochondrial membrane ATP synthase (F(1)F(0) ATP synthase or Complex V) produces ATP from ADP in the presence of a proton gradient across the membrane which is generated by electron transport complexes of the respiratory chain. F-type ATPases consist of two structural domains, F(1) - containing the extramembraneous catalytic core and F(0) - containing the membrane proton channel, linked together by a central stalk and a peripheral stalk. During catalysis, ATP synthesis in the catalytic domain of F(1) is coupled via a rotary mechanism of the central stalk subunits to proton translocation. Part of the complex F(0) domain. A homomeric c-ring of probably 10 subunits is part of the complex rotary element. The polypeptide is ATP synthase F(0) complex subunit C2, mitochondrial (Pongo abelii (Sumatran orangutan)).